A 100-amino-acid chain; its full sequence is Thioredoxin (100 aa).

The region spanning 1–100 (MKHITNKAEL…PKNELKELLK (100 aa)) is the Thioredoxin domain. A disulfide bridge connects residues cysteine 29 and cysteine 32.

The protein belongs to the thioredoxin family.

In terms of biological role, participates in various redox reactions through the reversible oxidation of its active center dithiol to a disulfide and catalyzes dithiol-disulfide exchange reactions. The protein is Thioredoxin (trxA) of Mycoplasmoides gallisepticum (strain R(low / passage 15 / clone 2)) (Mycoplasma gallisepticum).